Consider the following 776-residue polypeptide: K(+) efflux antiporter 3, chloroplastic (776 aa).

Residues 1–72 (MAISTMLGSI…KVFLDTSKRF (72 aa)) constitute a chloroplast transit peptide. Over 73–93 (YFQGRWSESSGRRVETYAGVD) the chain is Lumenal, thylakoid. The chain crosses the membrane as a helical span at residues 94–114 (VASAVDVINDLGFDTLTFLMV). Thr115 is a topological domain (stromal). The chain crosses the membrane as a helical span at residues 116 to 136 (VIIVPAFRILKASPILGFFFA). Over 137–153 (GVVLNQFGLIRNLTDVK) the chain is Lumenal, thylakoid. Residues 154-174 (VLSEWGILFLLFEMGLELSLA) form a helical membrane-spanning segment. Residues 175 to 181 (RLKALAK) are Stromal-facing. The chain crosses the membrane as a helical span at residues 182-202 (FAFGMGLTQVLLCTAAFTAFE). The Lumenal, thylakoid segment spans residues 203–232 (LPPNGAIGTKILEFLFHSRPDLVNIRSIDE). Residues 233–253 (AVVIGAALSLSSSAFVLQLLA) form a helical membrane-spanning segment. At 254–266 (EKGELPTRFGSAT) the chain is on the stromal side. A helical transmembrane segment spans residues 267 to 287 (LGILLLQDIAVVPLLVILPVL). The Lumenal, thylakoid portion of the chain corresponds to 288-296 (ESQDIGGES). A helical membrane pass occupies residues 297-317 (IWPMLAKESAKALGGLGILSL). Over 318-338 (GGKFFLRRIFEVVAETRSSEA) the chain is Stromal. The chain crosses the membrane as a helical span at residues 339–359 (FVALCLLTVAGTSLVTQWLGF). Topologically, residues 360 to 389 (SDTLGAFLAGALLAETNFRTQIEADIRPFR) are lumenal, thylakoid. The helical transmembrane segment at 390-410 (GLLLGLFFVTTGTSIDMEVLF) threads the bilayer. Topologically, residues 411-415 (REWPN) are stromal. A helical transmembrane segment spans residues 416-436 (VLSLLGGLIVIKTLIITAIGP). The Lumenal, thylakoid segment spans residues 437 to 445 (RVGLTIQES). A helical transmembrane segment spans residues 446 to 466 (VRVGFLLSQGGEFAFVVFSLA). The Stromal segment spans residues 467-468 (NR). Residues 469–489 (LGVLPNELNKLLIIVVVLSMA) form a helical membrane-spanning segment. Residues 490–526 (LTPYLNQLGRKAADFLDERLDPGEKIGEDVNFDVSES) lie on the Lumenal, thylakoid side of the membrane. Positions 524-649 (SESIVIIGFG…KKAGATDAIL (126 aa)) constitute an RCK N-terminal domain. The helical transmembrane segment at 527–547 (IVIIGFGQMGQVLANFLSTPL) threads the bilayer. The Stromal segment spans residues 548-776 (VSDSDLVGWP…FVGKADKAQD (229 aa)). The disordered stretch occupies residues 728-776 (MQMKASDSNSDSAAEILQETAGLSQPPEIDDSSVNIDNGFVGKADKAQD).

Belongs to the monovalent cation:proton antiporter 2 (CPA2) transporter (TC 2.A.37) family. KEA (TC 2.A.37.1) subfamily. As to expression, expressed at low levels in flowers, siliques and leaves. Expressed at low levels in flowers and leaves. In terms of tissue distribution, most abundant splice form in all organs, including siliques, flowers, leaves and roots. Preferentially expressed in photosynthetically active tissues, including seedling cotyledons and mature leaves. As to expression, expressed in shoots and roots.

Its subcellular location is the plastid. It localises to the chloroplast membrane. The protein localises to the golgi apparatus membrane. It is found in the chloroplast thylakoid membrane. The catalysed reaction is K(+)(in) + H(+)(out) = K(+)(out) + H(+)(in). Its activity is regulated as follows. Regulated by a mechanism involving lumenal C-terminus region; a fine-tuned balance between photoprotective energy dissipation in high light and a maximum quantum yield in low light involves a reduced activity under high light. Functionally, electroneutral K(+)/H(+) efflux antiporter assuring proton efflux from the thylakoid lumen to the plastid stroma, thus increasing the membrane potential at the expense of the proton gradient (delta pH) component of the proton motive force (PMF). Promotes photosynthesis and growth in conditions where the chloroplast (cp)ATP synthase activity is low (e.g. cgl160 mutant background) by reducing the pH gradient across the thylakoid membrane. Accelerates photosynthetic acclimation in fluctuating light environments by modulating two components of the proton motive force, the proton gradient and the electric potential (delta Psi). Promotes the relaxation of photoprotective energy-dependent non-photochemical quenching (NPQ) after transitions from high to low light, thus enhancing photosystem II (PSII) quantum efficiency in fluctuating light. On transition from high to low light, slows down photoprotection by dissipating the pH gradient across the thylakoid membrane. During photosynthetic response on transition from dark to low light, involved in a sequential mechanism of adaptation; VCCN1 and CLCe first trigger the activation of photoprotection, which is later down-regulated by KEA3 to a low steady state, while adjusting electron transport. Together with the chloroplast NADH dehydrogenase-like (NDH) complex, maximizes photosynthesis efficiency after a long dark adaptation. Required in roots for rapid hyperosmotic-induced Ca(2+) responses and for osmo-sensory potentiation in hyperosmotic conditions. In terms of biological role, low K(+)/H(+) efflux antiporter activity. Its function is as follows. Low K(+)/H(+) efflux antiporter activity. Promotes non-photochemical quenching (NPQ) in high light conditions. This Arabidopsis thaliana (Mouse-ear cress) protein is K(+) efflux antiporter 3, chloroplastic.